A 669-amino-acid chain; its full sequence is DNA mismatch repair protein MutL (669 aa).

The interval 361-409 (ENVFSQPYQAPVTSSTQKKSTGAYQGSAGKGLTDTQKSPQKTLDTRQFG) is disordered. 2 stretches are compositionally biased toward polar residues: residues 363–384 (VFSQ…TGAY) and 393–402 (TDTQKSPQKT).

Belongs to the DNA mismatch repair MutL/HexB family.

Its function is as follows. This protein is involved in the repair of mismatches in DNA. It is required for dam-dependent methyl-directed DNA mismatch repair. May act as a 'molecular matchmaker', a protein that promotes the formation of a stable complex between two or more DNA-binding proteins in an ATP-dependent manner without itself being part of a final effector complex. The chain is DNA mismatch repair protein MutL from Proteus mirabilis (strain HI4320).